Reading from the N-terminus, the 92-residue chain is Putative lambdoid prophage defective integrase (92 aa).

This sequence belongs to the 'phage' integrase family.

In Escherichia coli O157:H7, this protein is Putative lambdoid prophage defective integrase (intG).